A 281-amino-acid polypeptide reads, in one-letter code: MEAARDAQHSDVLESKGCLASRTSSHQNRRASLSSDGTGLRVTDAPGLPRVMTPSDTASGLGQKTSSTSSSSSSSSSSSPSSSSSAQANRSLKVSLPEIQKEKYPEEFSLLKSQTTDGQRPEWTFYPRFSSNIHTYHVGKQCFFNGVFRGNRKSVAERTVDKSLGKKKYDIDPRNGIPKLTPGDNPYMFPEQSKEFFKAGATLPPVNFSLGPYEKKFDTFIPLEPLPQIPNLPFWEKEKANNLKNEIKEVEDLDNWQAPMPFLHGFLSTANRTITTCDQKV.

Positions Met1–Glu14 are enriched in basic and acidic residues. The interval Met1–Leu92 is disordered. Positions Ser21–Gly37 are enriched in polar residues. Residue Thr53 is modified to Phosphothreonine. A compositionally biased stretch (polar residues) spans Pro54–Thr65. Over residues Ser66–Ser85 the composition is skewed to low complexity. Residues Ser71, Ser74, Ser77, Ser78, Ser79, and Ser91 each carry the phosphoserine modification.

As to expression, detected in pachytene spermatocytes and round spermatids.

This Rattus norvegicus (Rat) protein is Spermatogenesis-associated serine-rich protein 1 (Spats1).